Here is a 101-residue protein sequence, read N- to C-terminus: Small ribosomal subunit protein uS14 (101 aa).

It belongs to the universal ribosomal protein uS14 family. Part of the 30S ribosomal subunit. Contacts proteins S3 and S10.

Its function is as follows. Binds 16S rRNA, required for the assembly of 30S particles and may also be responsible for determining the conformation of the 16S rRNA at the A site. The polypeptide is Small ribosomal subunit protein uS14 (Methylibium petroleiphilum (strain ATCC BAA-1232 / LMG 22953 / PM1)).